A 390-amino-acid chain; its full sequence is Formamidopyrimidine-DNA glycosylase (390 aa).

Residue proline 2 is the Schiff-base intermediate with DNA of the active site. Glutamate 3 functions as the Proton donor in the catalytic mechanism. Residue lysine 60 is the Proton donor; for beta-elimination activity of the active site. 4 residues coordinate DNA: tyrosine 107, arginine 126, lysine 167, and asparagine 186. The disordered stretch occupies residues 283-390 (AEKAAKVRPA…AGKKPKGRKS (108 aa)). Residues 301-316 (DDGDGEEDEQETEKED) are compositionally biased toward acidic residues. Over residues 321–337 (SKKGQKPRGGRGKKPAS) the composition is skewed to basic residues. The segment covering 343-355 (ESDDDGDDSEAEE) has biased composition (acidic residues). Residues 360 to 370 (PKGRGTKPAIK) are compositionally biased toward basic residues.

The protein belongs to the FPG family. Monomer. In terms of tissue distribution, expressed in leaves (at protein levels).

It is found in the nucleus. It carries out the reaction Hydrolysis of DNA containing ring-opened 7-methylguanine residues, releasing 2,6-diamino-4-hydroxy-5-(N-methyl)formamidopyrimidine.. The catalysed reaction is 2'-deoxyribonucleotide-(2'-deoxyribose 5'-phosphate)-2'-deoxyribonucleotide-DNA = a 3'-end 2'-deoxyribonucleotide-(2,3-dehydro-2,3-deoxyribose 5'-phosphate)-DNA + a 5'-end 5'-phospho-2'-deoxyribonucleoside-DNA + H(+). Involved in base excision repair of DNA damaged by oxidation or by mutagenic agents. Acts as a DNA glycosylase that recognizes and removes damaged bases. Can process efficiently 4,6-diamino-5-formamidopyrimidine (FapyA), 2,6-diamino-4- hydroxy-5-formamidopyrimidine (FapyG) and the further oxidation products of 8-oxoguanine (8-oxoG), such as guanidinohydantoin and spiroiminodihydantoin. Has marginal activity towards 8-oxoG. Has AP (apurinic/apyrimidinic) lyase activity. Cleaves the DNA backbone by beta-delta elimination to generate a single-strand break at the site of the removed base with both 3'- and 5'-phosphates. This is Formamidopyrimidine-DNA glycosylase (FPG1) from Arabidopsis thaliana (Mouse-ear cress).